Reading from the N-terminus, the 140-residue chain is Nucleoside diphosphate kinase (140 aa).

Positions 11, 59, 87, 93, 104, and 114 each coordinate ATP. The active-site Pros-phosphohistidine intermediate is His-117.

It belongs to the NDK family. Homotetramer. Mg(2+) serves as cofactor.

The protein resides in the cytoplasm. It catalyses the reaction a 2'-deoxyribonucleoside 5'-diphosphate + ATP = a 2'-deoxyribonucleoside 5'-triphosphate + ADP. The enzyme catalyses a ribonucleoside 5'-diphosphate + ATP = a ribonucleoside 5'-triphosphate + ADP. In terms of biological role, major role in the synthesis of nucleoside triphosphates other than ATP. The ATP gamma phosphate is transferred to the NDP beta phosphate via a ping-pong mechanism, using a phosphorylated active-site intermediate. In Nitrobacter hamburgensis (strain DSM 10229 / NCIMB 13809 / X14), this protein is Nucleoside diphosphate kinase.